The sequence spans 199 residues: MEPLKTHTGKAAVLNRINVDTDQIIPKQFLKRIERTGYGRFAFFDWRYLENGEPDPEFELNRKVYEGASILIAGENFGCGSSREHAPWALDDYGFKIIIAPSFADIFHQNCFKNGMLPIRMPYDQWKKLAGQYENQSLNMTVDLENQLIHDSEGKEISFEVDPHWKEMLINGYDEISLTLLLEDDIQQFESKRSSWLQA.

It belongs to the LeuD family. LeuD type 1 subfamily. As to quaternary structure, heterodimer of LeuC and LeuD.

It carries out the reaction (2R,3S)-3-isopropylmalate = (2S)-2-isopropylmalate. It participates in amino-acid biosynthesis; L-leucine biosynthesis; L-leucine from 3-methyl-2-oxobutanoate: step 2/4. Functionally, catalyzes the isomerization between 2-isopropylmalate and 3-isopropylmalate, via the formation of 2-isopropylmaleate. This Bacillus velezensis (strain DSM 23117 / BGSC 10A6 / LMG 26770 / FZB42) (Bacillus amyloliquefaciens subsp. plantarum) protein is 3-isopropylmalate dehydratase small subunit.